The sequence spans 305 residues: MSAPQKTSALRTPFKTVALVGRYSTAGIEGPLEELASYILRNGQDVVFERETSLATGLTGYPALTAEEIGREADVAVVLGGDGTLLGIARQLAGHNVPLIGVNHGRLGFMTDIPLEDVQSVLPDMLGGRYEAETRLLLESSVVRDDSPIFSALALNDVVVNRSGISGMVELAVSVDGYFMYNQRSDGLIVSTATGSTAYALSAGGPILHPTLSGLVLVPIAPHSLSNRPIVLPQEAEVTIEVATARDASVNFDMQSLTSLLPGDRIVVRRSKKTIQLLHPVGYNYYATLRKKLHWHEYPTEDNRL.

The active-site Proton acceptor is the Asp82. Residues 82–83 (DG), 156–157 (ND), Arg184, Asp186, 197–202 (TAYALS), Ala221, and Gln255 each bind NAD(+).

This sequence belongs to the NAD kinase family. It depends on a divalent metal cation as a cofactor.

The protein resides in the cytoplasm. It catalyses the reaction NAD(+) + ATP = ADP + NADP(+) + H(+). Functionally, involved in the regulation of the intracellular balance of NAD and NADP, and is a key enzyme in the biosynthesis of NADP. Catalyzes specifically the phosphorylation on 2'-hydroxyl of the adenosine moiety of NAD to yield NADP. The chain is NAD kinase from Cupriavidus pinatubonensis (strain JMP 134 / LMG 1197) (Cupriavidus necator (strain JMP 134)).